The chain runs to 1695 residues: Protein TOPAZ1 (1695 aa).

Disordered stretches follow at residues 1-128 (MRRH…DDPQ), 441-474 (MAQT…ELRR), and 725-753 (AEVR…NSVT). Residues 43–52 (RRKNRQKRRM) show a composition bias toward basic residues. Composition is skewed to basic and acidic residues over residues 59–68 (GKDKVERDRS), 92–113 (SDRR…ERHT), and 459–474 (NEYH…ELRR). The span at 735-753 (SVSMTTSGPQTLSIQNSVT) shows a compositional bias: polar residues.

It localises to the cytoplasm. It is found in the cytosol. Important for normal spermatogenesis and male fertility. Specifically required for progression to the post-meiotic stages of spermatocyte development. Seems to be necessary for normal expression levels of a number of testis-expressed gene transcripts, although its role in this process is unclear. The polypeptide is Protein TOPAZ1 (TOPAZ1) (Callithrix jacchus (White-tufted-ear marmoset)).